The primary structure comprises 197 residues: Small ribosomal subunit protein uS4B (197 aa).

Positions 88–150 constitute an S4 RNA-binding domain; it reads SRLDNMVYRM…SRKTEMFVNN (63 aa).

The protein belongs to the universal ribosomal protein uS4 family. As to quaternary structure, part of the 30S ribosomal subunit. Contacts protein S5. The interaction surface between S4 and S5 is involved in control of translational fidelity.

Functionally, one of the primary rRNA binding proteins, it binds directly to 16S rRNA where it nucleates assembly of the body of the 30S subunit. In terms of biological role, with S5 and S12 plays an important role in translational accuracy. This Clostridium perfringens (strain SM101 / Type A) protein is Small ribosomal subunit protein uS4B.